The chain runs to 297 residues: HTH-type transcriptional regulator ArgP (297 aa).

Residues 2 to 58 form the HTH lysR-type domain; sequence FDYKLLSALAAVVEQAGFERAAQVLGLSQSAISQRIKLLEARVGQPVLVRGTPPSPT. The segment at residues 19–38 is a DNA-binding region (H-T-H motif); sequence FERAAQVLGLSQSAISQRIK.

This sequence belongs to the LysR transcriptional regulatory family. In terms of assembly, homodimer.

Its function is as follows. Controls the transcription of genes involved in arginine and lysine metabolism. This is HTH-type transcriptional regulator ArgP from Pseudomonas fluorescens (strain Pf0-1).